A 332-amino-acid polypeptide reads, in one-letter code: ADP-L-glycero-D-manno-heptose-6-epimerase (332 aa).

NADP(+) contacts are provided by residues 11-12 (FI), 32-33 (DN), K39, K54, 76-80 (EGACS), and N93. The active-site Proton acceptor is Y140. An NADP(+)-binding site is contributed by K144. Residue N170 participates in substrate binding. Positions 171 and 179 each coordinate NADP(+). K179 acts as the Proton acceptor in catalysis. Residues R181, H188, 202–205 (FEGS), R215, and Y294 each bind substrate.

This sequence belongs to the NAD(P)-dependent epimerase/dehydratase family. HldD subfamily. In terms of assembly, homopentamer. The cofactor is NADP(+).

The enzyme catalyses ADP-D-glycero-beta-D-manno-heptose = ADP-L-glycero-beta-D-manno-heptose. It functions in the pathway nucleotide-sugar biosynthesis; ADP-L-glycero-beta-D-manno-heptose biosynthesis; ADP-L-glycero-beta-D-manno-heptose from D-glycero-beta-D-manno-heptose 7-phosphate: step 4/4. Catalyzes the interconversion between ADP-D-glycero-beta-D-manno-heptose and ADP-L-glycero-beta-D-manno-heptose via an epimerization at carbon 6 of the heptose. The chain is ADP-L-glycero-D-manno-heptose-6-epimerase from Dechloromonas aromatica (strain RCB).